A 527-amino-acid polypeptide reads, in one-letter code: Serine/threonine-protein kinase NLK (527 aa).

2 sufficient for interaction with DAPK3 regions span residues 1 to 125 (MSLC…KAHH) and 124 to 416 (HHHQ…SKRI). Required for interaction with TAB2 stretches follow at residues 1–304 (MSLC…VVTQ) and 434–527 (YHTC…LVWE). 2 disordered regions span residues 22–72 (AAAA…SSAA) and 90–139 (QQPY…LDIE). Basic residues predominate over residues 26–54 (GHHHHHHHHLPHLPPPHLHHHHHPQHHLH). The segment covering 103 to 119 (PGPAAAAPAQVQAAAAA) has biased composition (low complexity). The span at 122-131 (KAHHHQHSHH) shows a compositional bias: basic residues. One can recognise a Protein kinase domain in the interval 138 to 427 (IEPDRPIGYG…AKDALAHPYL (290 aa)). ATP-binding positions include 144–152 (IGYGAFGVV) and Lys-167. Asp-264 functions as the Proton acceptor in the catalytic mechanism. Thr-298 carries the post-translational modification Phosphothreonine; by autocatalysis. The TQE signature appears at 298–300 (TQE). Positions 428–527 (DEGRLRYHTC…EMPPSPLVWE (100 aa)) are required for homodimerization and kinase activation and localization to the nucleus. Ser-522 is subject to Phosphoserine.

This sequence belongs to the protein kinase superfamily. CMGC Ser/Thr protein kinase family. MAP kinase subfamily. Homodimer. Homodimerization is required for intermolecular autophosphorylation, kinase activation and nuclear localization. Interacts with RNF138/NARF. Interacts with FOXO1 and FOXO3. Interacts with the upstream activating kinases HIPK2 and MAP3K7/TAK1. Interaction with MAP3K7/TAK1 seems to be indirect, and may be mediated by other proteins such as STAT3, TAB1 and TAB2. Interacts with and phosphorylates a number of transcription factors including FOXO4, LEF1, MYB, MYBL1, MYBL2, NOTCH1 and TCF7L2/TCF4. May interact with components of cullin-RING-based SCF (SKP1-CUL1-F-box protein) E3 ubiquitin-protein ligase complexes. Interacts with MEF2A. Interacts with ATF5; the interaction stabilizes ATF5 at the protein level in a kinase-independent manner. The cofactor is Mg(2+). Post-translationally, phosphorylated on Thr-298. Intermolecular autophosphorylation on Thr-298 activates the enzyme. As to expression, expressed at high levels in the brain, and at lower levels in heart, kidney, lung and liver.

The protein localises to the nucleus. It localises to the cytoplasm. The enzyme catalyses L-seryl-[protein] + ATP = O-phospho-L-seryl-[protein] + ADP + H(+). The catalysed reaction is L-threonyl-[protein] + ATP = O-phospho-L-threonyl-[protein] + ADP + H(+). Activated by the non-canonical Wnt signaling pathway, in which WNT5A leads to activation of MAP3K7/TAK1 and HIPK2, which subsequently phosphorylates and activates this protein. Activated by dimerization and subsequent intermolecular autophosphorylation on Thr-298. Other cytokines such as IL6 may also activate this regulatory circuit. Its function is as follows. Serine/threonine-protein kinase that regulates a number of transcription factors with key roles in cell fate determination. Positive effector of the non-canonical Wnt signaling pathway, acting downstream of WNT5A, MAP3K7/TAK1 and HIPK2. Negative regulator of the canonical Wnt/beta-catenin signaling pathway. Binds to and phosphorylates TCF7L2/TCF4 and LEF1, promoting the dissociation of the TCF7L2/LEF1/beta-catenin complex from DNA, as well as the ubiquitination and subsequent proteolysis of LEF1. Together these effects inhibit the transcriptional activation of canonical Wnt/beta-catenin target genes. Negative regulator of the Notch signaling pathway. Binds to and phosphorylates NOTCH1, thereby preventing the formation of a transcriptionally active ternary complex of NOTCH1, RBPJ/RBPSUH and MAML1. Negative regulator of the MYB family of transcription factors. Phosphorylation of MYB leads to its subsequent proteolysis while phosphorylation of MYBL1 and MYBL2 inhibits their interaction with the coactivator CREBBP. Other transcription factors may also be inhibited by direct phosphorylation of CREBBP itself. Acts downstream of IL6 and MAP3K7/TAK1 to phosphorylate STAT3, which is in turn required for activation of NLK by MAP3K7/TAK1. Upon IL1B stimulus, cooperates with ATF5 to activate the transactivation activity of C/EBP subfamily members. Phosphorylates ATF5 but also stabilizes ATF5 protein levels in a kinase-independent manner. Acts as an inhibitor of the mTORC1 complex in response to osmotic stress by mediating phosphorylation of RPTOR, thereby preventing recruitment of the mTORC1 complex to lysosomes. This Mus musculus (Mouse) protein is Serine/threonine-protein kinase NLK.